The chain runs to 304 residues: Protease HtpX homolog (304 aa).

2 helical membrane-spanning segments follow: residues 14–34 and 39–59; these read VFIV…IGII and YLNG…IMVM. H144 contributes to the Zn(2+) binding site. E145 is a catalytic residue. H148 serves as a coordination point for Zn(2+). 2 consecutive transmembrane segments (helical) span residues 161–181 and 202–222; these read IALV…IFWG and LIIY…ATAI. E231 contacts Zn(2+). The disordered stretch occupies residues 276–295; sequence SPLKSKKDKPGIFDSHPPIS.

The protein belongs to the peptidase M48B family. Zn(2+) serves as cofactor.

The protein localises to the cell membrane. The polypeptide is Protease HtpX homolog (Listeria welshimeri serovar 6b (strain ATCC 35897 / DSM 20650 / CCUG 15529 / CIP 8149 / NCTC 11857 / SLCC 5334 / V8)).